We begin with the raw amino-acid sequence, 89 residues long: ATP synthase subunit e, mitochondrial (89 aa).

The residue at position 1 (S1) is an N-acetylserine. A helical membrane pass occupies residues Y8–L25.

F-type ATP synthases have 2 components, the catalytic core F(1) and the membrane-embedded component F(0), linked together by a central stalk and a peripheral stalk. The central stalk, also called rotor shaft, is often seen as part of F(1). The peripheral stalk is seen as part of F(0). F(0) contains the membrane channel next to the rotor. F-type ATP synthases form dimers but each monomer functions independently in ATP generation. The dimer consists of 18 different polypeptides: ATP1 (subunit alpha, part of F(1), 3 molecules per monomer), ATP2 (subunit beta, part of F(1), 3 molecules per monomer), ATP3 (subunit gamma, part of the central stalk), ATP4 (subunit b, part of the peripheral stalk), ATP5/OSCP (subunit 5/OSCP, part of the peripheral stalk), ATP6 (subunit a, part of the peripheral stalk), ATP7 (subunit d, part of the peripheral stalk), ATP8 (subunit 8, part of the peripheral stalk), OLI1 (subunit c, part of the rotor, 10 molecules per monomer), ATP14 (subunit h, part of the peripheral stalk), ATP15 (subunit epsilon, part of the central stalk), ATP16 (subunit delta, part of the central stalk), ATP17 (subunit f, part of the peripheral stalk), ATP18 (subunit i/j, part of the peripheral stalk). Dimer-specific subunits are ATP19 (subunit k, at interface between monomers), ATP20 (subunit g, at interface between monomers), TIM11 (subunit e, at interface between monomers). Also contains subunit L.

The protein resides in the mitochondrion inner membrane. Functionally, mitochondrial membrane ATP synthase (F(1)F(0) ATP synthase or Complex V) produces ATP from ADP in the presence of a proton gradient across the membrane which is generated by electron transport complexes of the respiratory chain. F-type ATP synthases consist of two structural domains, F(1) - containing the extramembraneous catalytic core, and F(0) - containing the membrane proton channel, linked together by a central stalk and a peripheral stalk. During catalysis, ATP synthesis in the catalytic domain of F(1) is coupled via a rotary mechanism of the central stalk subunits to proton translocation. Part of the complex F(0) domain. Minor subunit located with subunit a/ATP6 in the membrane. Together with subunit g/ATP20, probably contributes to membrane curvature at the site of the ATP synthase dimer, ultimately contributing to formation of cristae. The protein is ATP synthase subunit e, mitochondrial of Pichia angusta (Yeast).